The primary structure comprises 465 residues: A-type ATP synthase subunit B (465 aa).

The protein belongs to the ATPase alpha/beta chains family. In terms of assembly, has multiple subunits with at least A(3), B(3), C, D, E, F, H, I and proteolipid K(x).

It is found in the cell membrane. Component of the A-type ATP synthase that produces ATP from ADP in the presence of a proton gradient across the membrane. The B chain is a regulatory subunit. This is A-type ATP synthase subunit B from Thermococcus kodakarensis (strain ATCC BAA-918 / JCM 12380 / KOD1) (Pyrococcus kodakaraensis (strain KOD1)).